Here is a 269-residue protein sequence, read N- to C-terminus: Hydroxyethylthiazole kinase (269 aa).

Met-42 provides a ligand contact to substrate. ATP contacts are provided by Arg-118 and Ser-164. Gly-191 is a substrate binding site.

This sequence belongs to the Thz kinase family. Mg(2+) serves as cofactor.

It catalyses the reaction 5-(2-hydroxyethyl)-4-methylthiazole + ATP = 4-methyl-5-(2-phosphooxyethyl)-thiazole + ADP + H(+). It functions in the pathway cofactor biosynthesis; thiamine diphosphate biosynthesis; 4-methyl-5-(2-phosphoethyl)-thiazole from 5-(2-hydroxyethyl)-4-methylthiazole: step 1/1. Catalyzes the phosphorylation of the hydroxyl group of 4-methyl-5-beta-hydroxyethylthiazole (THZ). The chain is Hydroxyethylthiazole kinase from Listeria monocytogenes serotype 4b (strain F2365).